The primary structure comprises 493 residues: Cytochrome P450 2A9 (493 aa).

A heme-binding site is contributed by Cys-438.

The protein belongs to the cytochrome P450 family. Heme is required as a cofactor. In terms of tissue distribution, liver.

Its subcellular location is the endoplasmic reticulum membrane. The protein resides in the microsome membrane. It catalyses the reaction an organic molecule + reduced [NADPH--hemoprotein reductase] + O2 = an alcohol + oxidized [NADPH--hemoprotein reductase] + H2O + H(+). Its function is as follows. Cytochromes P450 are a group of heme-thiolate monooxygenases. In liver microsomes, this enzyme is involved in an NADPH-dependent electron transport pathway. It oxidizes a variety of structurally unrelated compounds, including steroids, fatty acids, and xenobiotics. This chain is Cytochrome P450 2A9 (CYP2A9), found in Mesocricetus auratus (Golden hamster).